Consider the following 87-residue polypeptide: DNA polymerase epsilon subunit C (87 aa).

In terms of assembly, DNA polymerase epsilon is a heterotetramer consisting of cdc20/Pol2, dpb2, dpb3, and dpb4. Also forms a heterodimer consisting dpb3 and dpb4. Interacts directly with cdc20/pol2 and dpb4.

The protein resides in the nucleus. Functionally, as accessory component of the DNA polymerase epsilon (DNA polymerase II) participates in chromosomal DNA replication. It is required during synthesis of the leading and lagging DNA strands at the replication fork and binds at/or near replication origins and moves along DNA with the replication fork. It has 3'-5' proofreading exonuclease activity that correct errors arising during DNA replication. It is also involved in DNA synthesis during DNA repair. The dpb3-dpb4 dimer associates with histone deacetylases, chromatin remodelers, and histones and plays a crucial role in the inheritance of histone hypoacetylation and H3K9 methylation in heterochromatin. The dpb3-dpb4 dimer is also required for the recruitment of sir2 to heterochromatin. This Schizosaccharomyces pombe (strain 972 / ATCC 24843) (Fission yeast) protein is DNA polymerase epsilon subunit C.